The sequence spans 97 residues: Co-chaperonin GroES (97 aa).

Belongs to the GroES chaperonin family. In terms of assembly, heptamer of 7 subunits arranged in a ring. Interacts with the chaperonin GroEL.

Its subcellular location is the cytoplasm. Its function is as follows. Together with the chaperonin GroEL, plays an essential role in assisting protein folding. The GroEL-GroES system forms a nano-cage that allows encapsulation of the non-native substrate proteins and provides a physical environment optimized to promote and accelerate protein folding. GroES binds to the apical surface of the GroEL ring, thereby capping the opening of the GroEL channel. In Ectopseudomonas mendocina (strain ymp) (Pseudomonas mendocina), this protein is Co-chaperonin GroES.